A 274-amino-acid polypeptide reads, in one-letter code: Large ribosomal subunit protein uL2 (274 aa).

A disordered region spans residues 223–274 (VAMNPVDHPHGGGEGRTSGGRHPVTPWGVPTKGYKTRSNKRTDKYIVRRRNK).

Belongs to the universal ribosomal protein uL2 family. As to quaternary structure, part of the 50S ribosomal subunit. Forms a bridge to the 30S subunit in the 70S ribosome.

Functionally, one of the primary rRNA binding proteins. Required for association of the 30S and 50S subunits to form the 70S ribosome, for tRNA binding and peptide bond formation. It has been suggested to have peptidyltransferase activity; this is somewhat controversial. Makes several contacts with the 16S rRNA in the 70S ribosome. This chain is Large ribosomal subunit protein uL2, found in Shewanella baltica (strain OS223).